Reading from the N-terminus, the 202-residue chain is Methylthioribulose-1-phosphate dehydratase (202 aa).

Residues H93 and H95 each coordinate Zn(2+).

This sequence belongs to the aldolase class II family. MtnB subfamily. It depends on Zn(2+) as a cofactor.

It catalyses the reaction 5-(methylsulfanyl)-D-ribulose 1-phosphate = 5-methylsulfanyl-2,3-dioxopentyl phosphate + H2O. Its pathway is amino-acid biosynthesis; L-methionine biosynthesis via salvage pathway; L-methionine from S-methyl-5-thio-alpha-D-ribose 1-phosphate: step 2/6. In terms of biological role, catalyzes the dehydration of methylthioribulose-1-phosphate (MTRu-1-P) into 2,3-diketo-5-methylthiopentyl-1-phosphate (DK-MTP-1-P). The chain is Methylthioribulose-1-phosphate dehydratase from Klebsiella pneumoniae (strain 342).